Here is a 286-residue protein sequence, read N- to C-terminus: NADPH-dependent 7-cyano-7-deazaguanine reductase (286 aa).

92 to 94 contributes to the substrate binding site; that stretch reads IES. Position 94 to 95 (94 to 95) interacts with NADPH; that stretch reads SK. Cysteine 194 functions as the Thioimide intermediate in the catalytic mechanism. Aspartate 201 functions as the Proton donor in the catalytic mechanism. Substrate is bound at residue 233–234; the sequence is HE. An NADPH-binding site is contributed by 262–263; that stretch reads RG.

This sequence belongs to the GTP cyclohydrolase I family. QueF type 2 subfamily. As to quaternary structure, homodimer.

The protein localises to the cytoplasm. It carries out the reaction 7-aminomethyl-7-carbaguanine + 2 NADP(+) = 7-cyano-7-deazaguanine + 2 NADPH + 3 H(+). Its pathway is tRNA modification; tRNA-queuosine biosynthesis. Catalyzes the NADPH-dependent reduction of 7-cyano-7-deazaguanine (preQ0) to 7-aminomethyl-7-deazaguanine (preQ1). This chain is NADPH-dependent 7-cyano-7-deazaguanine reductase, found in Shewanella sp. (strain MR-4).